We begin with the raw amino-acid sequence, 292 residues long: Undecaprenyl-diphosphatase (292 aa).

5 consecutive transmembrane segments (helical) span residues M87–E107, F113–V133, A190–G210, A219–M239, and F250–L270.

Belongs to the UppP family.

Its subcellular location is the cell membrane. The catalysed reaction is di-trans,octa-cis-undecaprenyl diphosphate + H2O = di-trans,octa-cis-undecaprenyl phosphate + phosphate + H(+). Functionally, catalyzes the dephosphorylation of undecaprenyl diphosphate (UPP). Confers resistance to bacitracin. This chain is Undecaprenyl-diphosphatase, found in Thermobifida fusca (strain YX).